We begin with the raw amino-acid sequence, 292 residues long: Ribosomal protein L11 methyltransferase (292 aa).

Residues Thr144, Gly165, Asp187, and Asn229 each coordinate S-adenosyl-L-methionine.

Belongs to the methyltransferase superfamily. PrmA family.

Its subcellular location is the cytoplasm. It catalyses the reaction L-lysyl-[protein] + 3 S-adenosyl-L-methionine = N(6),N(6),N(6)-trimethyl-L-lysyl-[protein] + 3 S-adenosyl-L-homocysteine + 3 H(+). Functionally, methylates ribosomal protein L11. This Pseudomonas fluorescens (strain Pf0-1) protein is Ribosomal protein L11 methyltransferase.